Here is a 308-residue protein sequence, read N- to C-terminus: Aspartate carbamoyltransferase catalytic subunit (308 aa).

Carbamoyl phosphate-binding residues include arginine 49 and threonine 50. Lysine 77 contributes to the L-aspartate binding site. 3 residues coordinate carbamoyl phosphate: arginine 99, histidine 127, and glutamine 130. L-aspartate contacts are provided by arginine 160 and arginine 211. Positions 252 and 253 each coordinate carbamoyl phosphate.

It belongs to the aspartate/ornithine carbamoyltransferase superfamily. ATCase family. Heterododecamer (2C3:3R2) of six catalytic PyrB chains organized as two trimers (C3), and six regulatory PyrI chains organized as three dimers (R2).

It catalyses the reaction carbamoyl phosphate + L-aspartate = N-carbamoyl-L-aspartate + phosphate + H(+). It participates in pyrimidine metabolism; UMP biosynthesis via de novo pathway; (S)-dihydroorotate from bicarbonate: step 2/3. In terms of biological role, catalyzes the condensation of carbamoyl phosphate and aspartate to form carbamoyl aspartate and inorganic phosphate, the committed step in the de novo pyrimidine nucleotide biosynthesis pathway. The chain is Aspartate carbamoyltransferase catalytic subunit from Bacillus caldolyticus.